A 360-amino-acid polypeptide reads, in one-letter code: Photosystem II protein D1 (360 aa).

3 consecutive transmembrane segments (helical) span residues 29-46 (YIGW…TATS), 118-133 (HFLL…EWEF), and 142-156 (WISV…AASA). Position 118 (H118) interacts with chlorophyll a. Y126 contributes to the pheophytin a binding site. Residues D170 and E189 each coordinate [CaMn4O5] cluster. The helical transmembrane segment at 197–218 (LHQLGVAGVFGGSLFSAMHGSL) threads the bilayer. H198 is a binding site for chlorophyll a. Residues H215 and 264–265 (SF) each bind a quinone. Residue H215 coordinates Fe cation. H272 is a binding site for Fe cation. The helical transmembrane segment at 274–288 (FLGLWPVVGIWFTSM) threads the bilayer. Residues H332, E333, D342, and A344 each coordinate [CaMn4O5] cluster. A propeptide spanning residues 345–360 (SNESLPLALVAPAING) is cleaved from the precursor.

It belongs to the reaction center PufL/M/PsbA/D family. As to quaternary structure, PSII is composed of 1 copy each of membrane proteins PsbA, PsbB, PsbC, PsbD, PsbE, PsbF, PsbH, PsbI, PsbJ, PsbK, PsbL, PsbM, PsbT, PsbX, PsbY, PsbZ, Psb30/Ycf12, at least 3 peripheral proteins of the oxygen-evolving complex and a large number of cofactors. It forms dimeric complexes. Requires The D1/D2 heterodimer binds P680, chlorophylls that are the primary electron donor of PSII, and subsequent electron acceptors. It shares a non-heme iron and each subunit binds pheophytin, quinone, additional chlorophylls, carotenoids and lipids. D1 provides most of the ligands for the Mn4-Ca-O5 cluster of the oxygen-evolving complex (OEC). There is also a Cl(-1) ion associated with D1 and D2, which is required for oxygen evolution. The PSII complex binds additional chlorophylls, carotenoids and specific lipids. as cofactor. In terms of processing, tyr-161 forms a radical intermediate that is referred to as redox-active TyrZ, YZ or Y-Z. C-terminally processed by CTPA; processing is essential to allow assembly of the oxygen-evolving complex and thus photosynthetic growth.

The protein resides in the plastid. The protein localises to the chloroplast thylakoid membrane. The enzyme catalyses 2 a plastoquinone + 4 hnu + 2 H2O = 2 a plastoquinol + O2. Functionally, photosystem II (PSII) is a light-driven water:plastoquinone oxidoreductase that uses light energy to abstract electrons from H(2)O, generating O(2) and a proton gradient subsequently used for ATP formation. It consists of a core antenna complex that captures photons, and an electron transfer chain that converts photonic excitation into a charge separation. The D1/D2 (PsbA/PsbD) reaction center heterodimer binds P680, the primary electron donor of PSII as well as several subsequent electron acceptors. The protein is Photosystem II protein D1 of Antithamnion sp. (Red alga).